Here is a 481-residue protein sequence, read N- to C-terminus: RuvB-like helicase 2 (481 aa).

ATP is bound at residue Gly-76–Thr-83.

It belongs to the RuvB family. As to quaternary structure, may form heterododecamers with hel-1/rvb1. Component of the SWR1 chromatin remodeling complex, the INO80 chromatin remodeling complex, and of the R2TP complex.

The protein localises to the nucleus. The enzyme catalyses ATP + H2O = ADP + phosphate + H(+). Its function is as follows. DNA helicase which participates in several chromatin remodeling complexes, including the SWR1 and the INO80 complexes. The SWR1 complex mediates the ATP-dependent exchange of histone H2A for the H2A variant H2A.Z leading to transcriptional regulation of selected genes by chromatin remodeling. The INO80 complex remodels chromatin by shifting nucleosomes and is involved in DNA repair. Also involved in pre-rRNA processing. The chain is RuvB-like helicase 2 (hel-2) from Neurospora crassa (strain ATCC 24698 / 74-OR23-1A / CBS 708.71 / DSM 1257 / FGSC 987).